A 233-amino-acid chain; its full sequence is Large ribosomal subunit protein uL22m (233 aa).

Belongs to the universal ribosomal protein uL22 family. Component of the mitochondrial ribosome large subunit (39S) which comprises a 16S rRNA and about 50 distinct proteins.

It is found in the mitochondrion. In Drosophila melanogaster (Fruit fly), this protein is Large ribosomal subunit protein uL22m (mRpL22).